A 585-amino-acid chain; its full sequence is YTH domain-containing family protein 3 (585 aa).

Disordered regions lie at residues M1–M52, R243–G277, and P304–Q351. S2 is subject to N-acetylserine. Residues N15–I24 are compositionally biased toward polar residues. S23 bears the Phosphoserine mark. Over residues K244–P254 the composition is skewed to basic residues. Residues Q329–Q351 are compositionally biased toward low complexity. Residues G416 to I550 enclose the YTH domain. Residues K422–Y424, D428, W438–C439, N468, W492, and W497 contribute to the RNA site.

The protein belongs to the YTHDF family. YTHDF3 subfamily. In terms of assembly, interacts with CNOT1; promoting recruitment of the CCR4-NOT complex. Interacts with YTHDF1. Interacts with YTHDF2. Interacts with PAN3. Post-translationally, (Microbial infection) Proteolytically cleaved by HIV-1 protease when incorporated into HIV-1 particles in a nucleocapsid-dependent-manner. Cleavage by HIV-1 protease probably ensures optimal infectivity of the mature virion.

The protein localises to the cytoplasm. It localises to the cytosol. Its subcellular location is the P-body. The protein resides in the stress granule. Specifically recognizes and binds N6-methyladenosine (m6A)-containing RNAs, and regulates their stability. M6A is a modification present at internal sites of mRNAs and some non-coding RNAs and plays a role in mRNA stability and processing. Acts as a regulator of mRNA stability by promoting degradation of m6A-containing mRNAs via interaction with the CCR4-NOT complex or PAN3. The YTHDF paralogs (YTHDF1, YTHDF2 and YTHDF3) share m6A-containing mRNAs targets and act redundantly to mediate mRNA degradation and cellular differentiation. Acts as a negative regulator of type I interferon response by down-regulating interferon-stimulated genes (ISGs) expression: acts by binding to FOXO3 mRNAs. Binds to FOXO3 mRNAs independently of METTL3-mediated m6A modification. Can also act as a regulator of mRNA stability in cooperation with YTHDF2 by binding to m6A-containing mRNA and promoting their degradation. Recognizes and binds m6A-containing circular RNAs (circRNAs); circRNAs are generated through back-splicing of pre-mRNAs, a non-canonical splicing process promoted by dsRNA structures across circularizing exons. Promotes formation of phase-separated membraneless compartments, such as P-bodies or stress granules, by undergoing liquid-liquid phase separation upon binding to mRNAs containing multiple m6A-modified residues: polymethylated mRNAs act as a multivalent scaffold for the binding of YTHDF proteins, juxtaposing their disordered regions and thereby leading to phase separation. The resulting mRNA-YTHDF complexes then partition into different endogenous phase-separated membraneless compartments, such as P-bodies, stress granules or neuronal RNA granules. May also recognize and bind N1-methyladenosine (m1A)-containing mRNAs: inhibits trophoblast invasion by binding to m1A-methylated transcripts of IGF1R, promoting their degradation. In terms of biological role, has some antiviral activity against HIV-1 virus: incorporated into HIV-1 particles in a nucleocapsid-dependent manner and reduces viral infectivity in the next cycle of infection. May interfere with this early step of the viral life cycle by binding to N6-methyladenosine (m6A) modified sites on the HIV-1 RNA genome. The sequence is that of YTH domain-containing family protein 3 from Homo sapiens (Human).